The sequence spans 460 residues: Argininosuccinate lyase (460 aa).

It belongs to the lyase 1 family. Argininosuccinate lyase subfamily.

The protein resides in the cytoplasm. The catalysed reaction is 2-(N(omega)-L-arginino)succinate = fumarate + L-arginine. The protein operates within amino-acid biosynthesis; L-arginine biosynthesis; L-arginine from L-ornithine and carbamoyl phosphate: step 3/3. The protein is Argininosuccinate lyase of Buchnera aphidicola subsp. Cinara cedri (strain Cc).